We begin with the raw amino-acid sequence, 378 residues long: MADARKAALDTALKKIEKNFGKGAIMRMGDAAQTTISTISSGSLALDDALGVGGYPRGRIVEIYGPESSGKTTVALHAVAEVQKQGGTAAYIDAENALDPVYAEHLGVNIDDLLLSQPDTGEQGLEIADALVSSGAVDILVVDSVAALVPRAEIEGEMGDAHVGLQARLMSQALRKLSGTLNKTKTIALFINQIREKVGVMFGNPETTPGGRALKFYATIRLEVRRAEQIKEGTNIIGNRVRIKVVKNKVAPPFKRAEVDIMYGQGISQTGEIVDMAAEKDIVKKSGSWYSYGDDRIGQGRENAKKYLDEHPDVMAEIRQKVRDAYGMDQTGEEDDQADDKSKDKATKPSDKSQAQAKPKKPVATETSLDLDDSKTDK.

G65–T72 is a binding site for ATP. The interval A325 to K378 is disordered. The segment covering D339–D351 has biased composition (basic and acidic residues).

This sequence belongs to the RecA family.

It is found in the cytoplasm. Functionally, can catalyze the hydrolysis of ATP in the presence of single-stranded DNA, the ATP-dependent uptake of single-stranded DNA by duplex DNA, and the ATP-dependent hybridization of homologous single-stranded DNAs. It interacts with LexA causing its activation and leading to its autocatalytic cleavage. This Lactiplantibacillus pentosus (Lactobacillus pentosus) protein is Protein RecA.